Reading from the N-terminus, the 301-residue chain is Amylovoran biosynthesis glycosyltransferase AmsB (301 aa).

The protein belongs to the glycosyltransferase 2 family.

It participates in glycan metabolism; exopolysaccharide biosynthesis. Involved in the biosynthesis of amylovoran, which functions as a virulence factor. May function as a glycosyl transferase which transfers galactose from UDP-galactose to a lipid-linked amylovoran-subunit precursor. This is Amylovoran biosynthesis glycosyltransferase AmsB (amsB) from Erwinia amylovora (Fire blight bacteria).